A 443-amino-acid chain; its full sequence is Cobyrinate a,c-diamide synthase (443 aa).

Residues 248–433 form the GATase cobBQ-type domain; that stretch reads KIAVAYDKAF…LHNHAVANPY (186 aa). Residue cysteine 327 is the Nucleophile of the active site.

The protein belongs to the CobB/CbiA family. Mg(2+) serves as cofactor.

It catalyses the reaction cob(II)yrinate + 2 L-glutamine + 2 ATP + 2 H2O = cob(II)yrinate a,c diamide + 2 L-glutamate + 2 ADP + 2 phosphate + 2 H(+). The catalysed reaction is Ni-sirohydrochlorin + 2 L-glutamine + 2 ATP + 2 H2O = Ni-sirohydrochlorin a,c-diamide + 2 L-glutamate + 2 ADP + 2 phosphate + 2 H(+). The protein operates within cofactor biosynthesis; adenosylcobalamin biosynthesis; cob(II)yrinate a,c-diamide from sirohydrochlorin (anaerobic route): step 10/10. In terms of biological role, catalyzes the ATP-dependent amidation of the two carboxylate groups at positions a and c of cobyrinate, using either L-glutamine or ammonia as the nitrogen source. Involved in the biosynthesis of the unique nickel-containing tetrapyrrole coenzyme F430, the prosthetic group of methyl-coenzyme M reductase (MCR), which plays a key role in methanogenesis and anaerobic methane oxidation. Catalyzes the ATP-dependent amidation of the two carboxylate groups at positions a and c of Ni-sirohydrochlorin, using L-glutamine or ammonia as the nitrogen source. The protein is Cobyrinate a,c-diamide synthase of Methanocaldococcus jannaschii (strain ATCC 43067 / DSM 2661 / JAL-1 / JCM 10045 / NBRC 100440) (Methanococcus jannaschii).